A 574-amino-acid polypeptide reads, in one-letter code: Proline--tRNA ligase (574 aa).

This sequence belongs to the class-II aminoacyl-tRNA synthetase family. ProS type 1 subfamily. In terms of assembly, homodimer.

Its subcellular location is the cytoplasm. The catalysed reaction is tRNA(Pro) + L-proline + ATP = L-prolyl-tRNA(Pro) + AMP + diphosphate. Catalyzes the attachment of proline to tRNA(Pro) in a two-step reaction: proline is first activated by ATP to form Pro-AMP and then transferred to the acceptor end of tRNA(Pro). As ProRS can inadvertently accommodate and process non-cognate amino acids such as alanine and cysteine, to avoid such errors it has two additional distinct editing activities against alanine. One activity is designated as 'pretransfer' editing and involves the tRNA(Pro)-independent hydrolysis of activated Ala-AMP. The other activity is designated 'posttransfer' editing and involves deacylation of mischarged Ala-tRNA(Pro). The misacylated Cys-tRNA(Pro) is not edited by ProRS. The sequence is that of Proline--tRNA ligase from Ralstonia nicotianae (strain ATCC BAA-1114 / GMI1000) (Ralstonia solanacearum).